The sequence spans 86 residues: Small ribosomal subunit protein bS18 (86 aa).

It belongs to the bacterial ribosomal protein bS18 family. As to quaternary structure, part of the 30S ribosomal subunit. Forms a tight heterodimer with protein bS6.

In terms of biological role, binds as a heterodimer with protein bS6 to the central domain of the 16S rRNA, where it helps stabilize the platform of the 30S subunit. This is Small ribosomal subunit protein bS18 from Campylobacter fetus subsp. fetus (strain 82-40).